Consider the following 126-residue polypeptide: Fluoride-specific ion channel FluC 1 (126 aa).

A run of 3 helical transmembrane segments spans residues 37 to 57 (HWGT…VLAL), 67 to 87 (IALL…TFVV), and 98 to 118 (LLAA…AAAA). Residues G77 and S80 each contribute to the Na(+) site.

Belongs to the fluoride channel Fluc/FEX (TC 1.A.43) family.

Its subcellular location is the cell inner membrane. It catalyses the reaction fluoride(in) = fluoride(out). With respect to regulation, na(+) is not transported, but it plays an essential structural role and its presence is essential for fluoride channel function. In terms of biological role, fluoride-specific ion channel. Important for reducing fluoride concentration in the cell, thus reducing its toxicity. This chain is Fluoride-specific ion channel FluC 1, found in Parasynechococcus marenigrum (strain WH8102).